A 483-amino-acid chain; its full sequence is tRNA sulfurtransferase (483 aa).

A THUMP domain is found at 61–165 (AEVLEILTTT…DELLNQVIAR (105 aa)). Residues 183–184 (LI), Lys265, Gly287, and Gln296 contribute to the ATP site. Cysteines 344 and 457 form a disulfide. The Rhodanese domain occupies 405-483 (EEGNAVVLDI…GFNNVKVYRP (79 aa)). Catalysis depends on Cys457, which acts as the Cysteine persulfide intermediate.

Belongs to the ThiI family.

The protein localises to the cytoplasm. It carries out the reaction [ThiI sulfur-carrier protein]-S-sulfanyl-L-cysteine + a uridine in tRNA + 2 reduced [2Fe-2S]-[ferredoxin] + ATP + H(+) = [ThiI sulfur-carrier protein]-L-cysteine + a 4-thiouridine in tRNA + 2 oxidized [2Fe-2S]-[ferredoxin] + AMP + diphosphate. The enzyme catalyses [ThiS sulfur-carrier protein]-C-terminal Gly-Gly-AMP + S-sulfanyl-L-cysteinyl-[cysteine desulfurase] + AH2 = [ThiS sulfur-carrier protein]-C-terminal-Gly-aminoethanethioate + L-cysteinyl-[cysteine desulfurase] + A + AMP + 2 H(+). It functions in the pathway cofactor biosynthesis; thiamine diphosphate biosynthesis. Its function is as follows. Catalyzes the ATP-dependent transfer of a sulfur to tRNA to produce 4-thiouridine in position 8 of tRNAs, which functions as a near-UV photosensor. Also catalyzes the transfer of sulfur to the sulfur carrier protein ThiS, forming ThiS-thiocarboxylate. This is a step in the synthesis of thiazole, in the thiamine biosynthesis pathway. The sulfur is donated as persulfide by IscS. In Vibrio cholerae serotype O1 (strain ATCC 39315 / El Tor Inaba N16961), this protein is tRNA sulfurtransferase.